Here is an 890-residue protein sequence, read N- to C-terminus: DNA mismatch repair protein MutS (890 aa).

Glycine 607–serine 614 contributes to the ATP binding site.

Belongs to the DNA mismatch repair MutS family.

This protein is involved in the repair of mismatches in DNA. It is possible that it carries out the mismatch recognition step. This protein has a weak ATPase activity. The sequence is that of DNA mismatch repair protein MutS from Bacillus thuringiensis (strain Al Hakam).